The primary structure comprises 411 residues: MSKEQFLRNKPHVNIGTIGHVDHGKTTLTSAITSVLKLKGCTEKSYSYEDIDSTKEEKKRGITINTTHVEYESDLRHYAHIDCPGHADYIKNMIIGAVQMDGAILVISLEDGPMPQTIEHLLLAKQIGIKKLVVFLNKEDKVDDEEIIFFIKEETKSMLDKYGFDSTLTPLITGSALKALEEIKLLKEIDLNNKWISKVINLIDTVDSYIEKPERNLNKPFLMPIEDSFYITGRGTVVTGRIENGIVKLNDKVELYGYDKSKLTSVIGIEMFNKGLSQGESGDNVGLLLRGIIKEDVKRGHVVAKPKSLKFYSEFKATLYILTSKEGGRTNPFKIGYKPQFFIRTLDITGEIKKLYSTTNENNTLELAIPGDNINANISLSKSIVLEKELRFSVREGGKTIGHGIIIDLIK.

A tr-type G domain is found at 10 to 214; it reads KPHVNIGTIG…TVDSYIEKPE (205 aa). A G1 region spans residues 19-26; it reads GHVDHGKT. A GTP-binding site is contributed by 19–26; it reads GHVDHGKT. T26 serves as a coordination point for Mg(2+). The G2 stretch occupies residues 61 to 65; that stretch reads GITIN. The segment at 82 to 85 is G3; the sequence is DCPG. Residues 82–86 and 137–140 each bind GTP; these read DCPGH and NKED. Positions 137–140 are G4; the sequence is NKED. The tract at residues 175–177 is G5; it reads SAL.

Belongs to the TRAFAC class translation factor GTPase superfamily. Classic translation factor GTPase family. EF-Tu/EF-1A subfamily.

The protein localises to the plastid. The protein resides in the apicoplast. The catalysed reaction is GTP + H2O = GDP + phosphate + H(+). Functionally, GTP hydrolase that promotes the GTP-dependent binding of aminoacyl-tRNA to the A-site of ribosomes during protein biosynthesis. The chain is Elongation factor Tu, apicoplast (tufA) from Theileria parva (East coast fever infection agent).